A 1059-amino-acid polypeptide reads, in one-letter code: Zinc finger protein 628 (1059 aa).

6 C2H2-type zinc fingers span residues 36–58, 64–86, 92–114, 120–142, 148–170, and 176–198; these read YECGECGKSFRWSSRLLHHQRTH, YKCPDCPKAFKGSSALLYHQRGH, YQCPDCPKAFKRSSLLQIHRSVH, FICGQCGLAFKWSSHYQYHLRQH, YPCPDCPKAFKNSSSLRRHRHVH, and YTCGVCGKSFTQSTNLRQHQRVH. A Phosphothreonine modification is found at T199. The C2H2-type 7 zinc-finger motif lies at 204-226; sequence FRCPLCPKTFTHSSNLLLHQRTH. Disordered stretches follow at residues 226–247, 260–280, and 312–351; these read HGAAPAPGTASAAPPPQSREPG, LQPHSPPAPPAPPPPPPPVVP, and EHQPCPGPDAAPQPQEAPAEAPKADQPPSPLPQPPPPAAA. The segment covering 228-237 has biased composition (low complexity); the sequence is AAPAPGTASA. The span at 263-279 shows a compositional bias: pro residues; that stretch reads HSPPAPPAPPPPPPPVV. Residues 323 to 335 show a composition bias toward low complexity; sequence PQPQEAPAEAPKA. Over residues 336–351 the composition is skewed to pro residues; it reads DQPPSPLPQPPPPAAA. 7 consecutive C2H2-type zinc fingers follow at residues 356–378, 386–408, 454–476, 482–504, 510–532, 538–560, and 566–588; these read FACLPCGKSFRTVAGLSRHQHSH, FRCGSCDGSFPQLASLLAHQQCH, YKCAECGKSFKGSSGLRYHLRDH, YQCGECGKAFKRSSLLAIHQRVH, FTCGQCGLTFKWSSHYQYHLRLH, YACGECGKAFRNTSCLRRHRHVH, and HACGVCGKSFAQTSNLRQHQRVH. Position 589 is a phosphothreonine (T589). 2 C2H2-type zinc fingers span residues 594 to 616 and 622 to 644; these read FRCPLCPKTFTHSSNLLLHQRTH and FTCPICGRGFVMAAYLQRHLRTH. The segment covering 644-658 has biased composition (low complexity); that stretch reads HAPANTPPSTTAPAA. Residues 644 to 674 form a disordered region; the sequence is HAPANTPPSTTAPAAGPQPPAPLAAARAPPA. 4 tandem repeats follow at residues 818–831, 832–842, 843–853, and 854–864. The segment at 818 to 864 is 4 X approximate tandem repeats; that stretch reads VQLQPLRPAPEVTTVQLQPAQEVTTVQLQPAQEVTTVQLQPAQEVTT. The tract at residues 943–1059 is interaction with TAF4B; it reads DGEQTRLCVQ…LPAVQLVHTF (117 aa).

In terms of assembly, interacts with TAF4B.

The protein resides in the nucleus. In terms of biological role, transcriptional activator. Binds DNA on GT-box consensus sequence 5'-TTGGTT-3'. Plays a role in spermiogenesis. This is Zinc finger protein 628 (ZNF628) from Homo sapiens (Human).